The following is a 205-amino-acid chain: UPF0548 protein At2g17695 (205 aa).

Belongs to the UPF0548 family.

This is UPF0548 protein At2g17695 from Arabidopsis thaliana (Mouse-ear cress).